Reading from the N-terminus, the 593-residue chain is Probable tripeptidyl-peptidase SED3 (593 aa).

The N-terminal stretch at 1-18 is a signal peptide; that stretch reads MLLRWHSVIPLFLTMTVA. The propeptide at 19 to 198 is removed in mature form; sequence LPNTYRTVVE…SLQVIYSSTN (180 aa). 4 N-linked (GlcNAc...) asparagine glycosylation sites follow: Asn198, Asn204, Asn261, and Asn275. The 387-residue stretch at 206-592 folds into the Peptidase S53 domain; sequence TITPRCLREL…RILAKIVQHM (387 aa). Residues Glu282 and Asp286 each act as charge relay system in the active site. Asn295 carries N-linked (GlcNAc...) asparagine glycosylation. The active-site Charge relay system is the Ser496. Ca(2+) contacts are provided by Asp538 and Ile539. N-linked (GlcNAc...) asparagine glycans are attached at residues Asn554 and Asn566. Ca(2+)-binding residues include Gly570 and Asp572.

The cofactor is Ca(2+).

Its subcellular location is the secreted. The protein resides in the extracellular space. It carries out the reaction Release of an N-terminal tripeptide from a polypeptide.. Functionally, secreted tripeptidyl-peptidase which degrades proteins at acidic pHs and is involved in virulence. This Trichophyton verrucosum (strain HKI 0517) protein is Probable tripeptidyl-peptidase SED3 (SED3).